Consider the following 304-residue polypeptide: Non-specific ribonucleoside hydrolase RihC (304 aa).

Residue His233 is part of the active site.

The protein belongs to the IUNH family. RihC subfamily.

In terms of biological role, hydrolyzes both purine and pyrimidine ribonucleosides with a broad-substrate specificity. The protein is Non-specific ribonucleoside hydrolase RihC of Escherichia coli O45:K1 (strain S88 / ExPEC).